We begin with the raw amino-acid sequence, 441 residues long: Glutamyl-tRNA reductase (441 aa).

Residues 47-50 (TCNR), serine 110, 115-117 (ERE), and glutamine 121 contribute to the substrate site. Cysteine 48 acts as the Nucleophile in catalysis. 192–197 (GTGAYA) is an NADP(+) binding site.

Belongs to the glutamyl-tRNA reductase family. Homodimer.

It carries out the reaction (S)-4-amino-5-oxopentanoate + tRNA(Glu) + NADP(+) = L-glutamyl-tRNA(Glu) + NADPH + H(+). Its pathway is porphyrin-containing compound metabolism; protoporphyrin-IX biosynthesis; 5-aminolevulinate from L-glutamyl-tRNA(Glu): step 1/2. In terms of biological role, catalyzes the NADPH-dependent reduction of glutamyl-tRNA(Glu) to glutamate 1-semialdehyde (GSA). The sequence is that of Glutamyl-tRNA reductase from Pseudarthrobacter chlorophenolicus (strain ATCC 700700 / DSM 12829 / CIP 107037 / JCM 12360 / KCTC 9906 / NCIMB 13794 / A6) (Arthrobacter chlorophenolicus).